The chain runs to 370 residues: N-acetyltaurine hydrolase (370 aa).

Histidine 26, histidine 28, glutamate 189, histidine 221, histidine 250, and aspartate 318 together coordinate a divalent metal cation.

This sequence belongs to the metallo-dependent hydrolases superfamily. Phosphotriesterase family. A divalent metal cation serves as cofactor.

It is found in the cytoplasm. The protein localises to the cytosol. It carries out the reaction N-acetyltaurine + H2O = taurine + acetate. N-acetyltaurine hydrolase catalyzes the hydrolysis of N-acetyltaurine into taurine and acetate. The chain is N-acetyltaurine hydrolase (pter) from Dictyostelium discoideum (Social amoeba).